A 198-amino-acid polypeptide reads, in one-letter code: Endonuclease V (198 aa).

The Mg(2+) site is built by Asp-38 and Asp-101.

It belongs to the endonuclease V family. Mg(2+) is required as a cofactor.

Its subcellular location is the cytoplasm. It catalyses the reaction Endonucleolytic cleavage at apurinic or apyrimidinic sites to products with a 5'-phosphate.. DNA repair enzyme involved in the repair of deaminated bases. Selectively cleaves double-stranded DNA at the second phosphodiester bond 3' to a deoxyinosine leaving behind the intact lesion on the nicked DNA. This is Endonuclease V from Saccharolobus islandicus (strain M.14.25 / Kamchatka #1) (Sulfolobus islandicus).